Here is a 146-residue protein sequence, read N- to C-terminus: Hemoglobin subunit beta (146 aa).

One can recognise a Globin domain in the interval 2-146 (FLTAEEKGLV…VASALAHRYH (145 aa)). Residue Ser-44 is modified to Phosphoserine. The residue at position 59 (Lys-59) is an N6-acetyllysine. Position 63 (His-63) interacts with heme b. Lys-82 is subject to N6-acetyllysine. Heme b is bound at residue His-92. At Cys-93 the chain carries S-nitrosocysteine.

The protein belongs to the globin family. Heterotetramer of two alpha chains and two beta chains. Red blood cells.

In terms of biological role, involved in oxygen transport from the lung to the various peripheral tissues. In Paguma larvata (Masked palm civet), this protein is Hemoglobin subunit beta (HBB).